Here is a 189-residue protein sequence, read N- to C-terminus: Interferon alpha-B (189 aa).

Positions 1–23 are cleaved as a signal peptide; sequence MAPAWSFLLALLLLSCNAICSLG. Intrachain disulfides connect C24-C122 and C52-C162.

This sequence belongs to the alpha/beta interferon family.

It is found in the secreted. Produced by macrophages, IFN-alpha have antiviral activities. Interferon stimulates the production of two enzymes: a protein kinase and an oligoadenylate synthetase. In Bos taurus (Bovine), this protein is Interferon alpha-B (IFNAB).